The following is a 687-amino-acid chain: Dictomallein (687 aa).

2 disordered regions span residues 1–45 and 73–112; these read MGNG…SRRL and TAGG…STSA. In terms of domain architecture, Peptidase M66 spans 233 to 501; the sequence is PVFGTDADVQ…QAWIASRVLA (269 aa). Residue H393 participates in Zn(2+) binding. The active site involves E394. H397 and H403 together coordinate Zn(2+).

It belongs to the dictomallein family. Requires Zn(2+) as cofactor.

The polypeptide is Dictomallein (dtmL) (Burkholderia mallei (strain NCTC 10247)).